An 895-amino-acid polypeptide reads, in one-letter code: Stonin-2 (895 aa).

3 disordered regions span residues 10–101, 144–204, and 236–279; these read THQS…AISN, ASES…METI, and NEVG…PKST. A compositionally biased stretch (basic and acidic residues) spans 64–73; it reads SHSEQDDSSE. 2 stretches are compositionally biased toward polar residues: residues 145 to 169 and 179 to 193; these read SESSWTTHSEDTSSPSVAPSYTDLQ and GRASGTDSTDNSSSL. Ser278, Ser284, and Ser299 each carry phosphoserine. 2 disordered regions span residues 291-326 and 386-424; these read ISSLNRPPSVTEAPPWRATNPFLNESLQDIQPSPIN and QIDDPDPVGNAALPDDDPTASVEPDAPSPTSALSQPRDG. Short sequence motifs (NPF) lie at residues 310–312 and 326–328; these read NPF. Residues 311-323 show a composition bias toward polar residues; it reads PFLNESLQDIQPS. The region spanning 424 to 557 is the SHD domain; it reads GWPMMLRIPE…DLPVQSMDLS (134 aa). The region spanning 565-872 is the MHD domain; that stretch reads EEEITVDIRD…AHYSYKVEIE (308 aa). Ser759 is modified (phosphoserine).

This sequence belongs to the Stoned B family. Interacts with the second C2 domain of synaptotagmins SYT1 and SYT2. Interacts with EPS15, EPS15R and ITSN1. Interacts indirectly with the AP-2 adapter complex. Interacts with TOR1A and COPS4; the interaction controls STON2 protein stability. Post-translationally, phosphorylated in vitro by PKD. In terms of processing, neddylated and ubiquitinated; leading to its degradation and inhibited by TOR1A and COPS4.

It localises to the synapse. Its subcellular location is the synaptosome. It is found in the cytoplasm. The protein resides in the membrane. Adapter protein involved in endocytic machinery. Involved in the synaptic vesicle recycling. May facilitate clathrin-coated vesicle uncoating. This is Stonin-2 (Ston2) from Rattus norvegicus (Rat).